Here is a 467-residue protein sequence, read N- to C-terminus: Glutamate--tRNA ligase (467 aa).

Positions 9 to 19 match the 'HIGH' region motif; that stretch reads PSPTGFLHIGG. Positions 250-254 match the 'KMSKS' region motif; it reads KLSKR. Residue Lys-253 coordinates ATP.

The protein belongs to the class-I aminoacyl-tRNA synthetase family. Glutamate--tRNA ligase type 1 subfamily. Monomer.

It localises to the cytoplasm. It catalyses the reaction tRNA(Glu) + L-glutamate + ATP = L-glutamyl-tRNA(Glu) + AMP + diphosphate. Functionally, catalyzes the attachment of glutamate to tRNA(Glu) in a two-step reaction: glutamate is first activated by ATP to form Glu-AMP and then transferred to the acceptor end of tRNA(Glu). This chain is Glutamate--tRNA ligase, found in Mesomycoplasma hyopneumoniae (strain J / ATCC 25934 / NCTC 10110) (Mycoplasma hyopneumoniae).